The primary structure comprises 205 residues: Ribonuclease HII (205 aa).

The RNase H type-2 domain maps to 1–205 (MLVCGVDEAG…RPARLIEAGG (205 aa)). 3 residues coordinate a divalent metal cation: D7, E8, and D105.

This sequence belongs to the RNase HII family. The cofactor is Mn(2+). It depends on Mg(2+) as a cofactor.

Its subcellular location is the cytoplasm. The enzyme catalyses Endonucleolytic cleavage to 5'-phosphomonoester.. Endonuclease that specifically degrades the RNA of RNA-DNA hybrids. This chain is Ribonuclease HII, found in Cenarchaeum symbiosum (strain A).